A 75-amino-acid chain; its full sequence is Small ribosomal subunit protein bS18c (75 aa).

It belongs to the bacterial ribosomal protein bS18 family. Part of the 30S ribosomal subunit.

It is found in the plastid. The protein resides in the chloroplast. The polypeptide is Small ribosomal subunit protein bS18c (Adiantum capillus-veneris (Maidenhair fern)).